The chain runs to 566 residues: MNFTHIIAEKINQTLENTFDLDKLEKLVEKPKDLNRGDYAFPTFSLSAKFHEAPQKIALKIADEIDRTNFANVKAVGPYVNFFIQRVEFTNQLLKEILLNDDFGRNNQGAGKKIVIDMSSPNIAKPMSMGHLRSTVIGEAISKIAKANGYQTIKINFLGDWGTQFGLMIAAYKLWGDDKLINKNPVDELVKLYVKINKESETDKSLKDSGRAWFKKLEDGDPEAVKLWNWFKSVSLKEFQEVYDRLGVSFDSMNGEAFYNDKMEPVVKMLASKGLLTESQGAEIVDLPNLLPKDNYPIAMIKRSDGATQYITRDLASAIYRHDAYDFAKSLYVVGAEQKDHFDQMKAILKLAGDDWADDIEHIGFGMITMNGKKMSTRKGNIVPLVDVLDTARQLAAEQISEKNPGLENADHVAEEVGAGAVVFNDLQKDRNLSIDFNLEKIVQFEGDTGPYVQYTHARAMSILRKSGQQAILNTGVTFVDEEAWPIVSRLSAYPEMIKRAWQLREPSIVAKYLLSLARDFNSYYAHTKILVNNEKMQSRLSLVQGVCSVLKSGLNLLGVSAPNQM.

Residues 121 to 131 carry the 'HIGH' region motif; it reads PNIAKPMSMGH.

Belongs to the class-I aminoacyl-tRNA synthetase family. As to quaternary structure, monomer.

The protein resides in the cytoplasm. It catalyses the reaction tRNA(Arg) + L-arginine + ATP = L-arginyl-tRNA(Arg) + AMP + diphosphate. This is Arginine--tRNA ligase from Oenococcus oeni (strain ATCC BAA-331 / PSU-1).